The primary structure comprises 960 residues: Probable RNA-binding protein 19 (960 aa).

The region spanning 2 to 79 is the RRM 1 domain; that stretch reads SRLIVKNLPN…SRITVEFCKS (78 aa). Disordered regions lie at residues 85–119 and 149–294; these read KPRA…KKKK and WAND…TTCH. A phosphoserine mark is found at S174, S176, and S180. A compositionally biased stretch (acidic residues) spans 176-194; sequence SGQESEEEGAGEDLEEEAS. A compositionally biased stretch (basic and acidic residues) spans 273 to 286; that stretch reads RPPEARAETEKPAN. RRM domains lie at 294 to 369 and 402 to 480; these read HTVK…REKN and GRLF…PSTI. K481 is covalently cross-linked (Glycyl lysine isopeptide (Lys-Gly) (interchain with G-Cter in SUMO2)). A disordered region spans residues 491–513; the sequence is LGSSSYKKKKEAQDKANSASSHN. The 73-residue stretch at 587–659 folds into the RRM 4 domain; that stretch reads TVILVKNLPA…VPLYLEWAPV (73 aa). The disordered stretch occupies residues 667-729; sequence PQKKKLQDTP…EEEEEESLPG (63 aa). Composition is skewed to acidic residues over residues 689–706 and 714–726; these read TVPD…EEGA and EEEE…EEES. RRM domains lie at 730-811 and 832-912; these read CTLF…ISER and SKIL…WADS. Phosphoserine is present on residues S936, S949, and S951.

Belongs to the RRM MRD1 family. Expressed in the crypts of Lieberkuhn of the intestine and in intestinal neoplasia (at protein level).

It is found in the nucleus. Its subcellular location is the nucleolus. The protein resides in the nucleoplasm. It localises to the cytoplasm. The protein localises to the chromosome. Its function is as follows. Plays a role in embryo pre-implantation development. The protein is Probable RNA-binding protein 19 (RBM19) of Homo sapiens (Human).